The chain runs to 364 residues: 3'(2'),5'-bisphosphate nucleotidase 1 (364 aa).

Catalysis depends on aspartate 54, which acts as the Proton acceptor. Residues glutamate 77, aspartate 141, isoleucine 143, and aspartate 144 each contribute to the Mg(2+) site. The active-site Proton acceptor is threonine 146. Threonine 146, histidine 243, serine 272, lysine 275, arginine 289, and aspartate 302 together coordinate adenosine 3',5'-bisphosphate. Positions 243, 272, 275, 289, and 302 each coordinate AMP. A Mg(2+)-binding site is contributed by aspartate 302.

This sequence belongs to the inositol monophosphatase superfamily. It depends on Mg(2+) as a cofactor.

It catalyses the reaction 3'-phosphoadenylyl sulfate + H2O = adenosine 5'-phosphosulfate + phosphate. The catalysed reaction is adenosine 3',5'-bisphosphate + H2O = AMP + phosphate. It carries out the reaction adenosine 2',5'-bisphosphate + H2O = AMP + phosphate. Functionally, phosphatase that converts adenosine 3'-phosphate 5'-phosphosulfate (PAPS) to adenosine 5'-phosphosulfate (APS) and 3'(2')-phosphoadenosine 5'-phosphate (PAP) to AMP. Regulates the flux of sulfur in the sulfur-activation pathway by converting PAPS to APS. Involved in salt tolerance. This Candida albicans (strain SC5314 / ATCC MYA-2876) (Yeast) protein is 3'(2'),5'-bisphosphate nucleotidase 1 (HAL21).